The primary structure comprises 796 residues: U-box domain-containing protein 51 (796 aa).

Disordered stretches follow at residues 163 to 195 (DMDT…SSHQ), 218 to 240 (TNIG…SLDV), and 270 to 292 (RSSQ…SSSQ). Residues 171 to 181 (ADDRSESRFSS) are compositionally biased toward basic and acidic residues. A compositionally biased stretch (low complexity) spans 182–195 (DSHSGTVSSTSSHQ). Low complexity predominate over residues 270–291 (RSSQMEEASSSSTYSDPTSSSS). Positions 298–407 (ELEKLKIELR…QRLEDALEGG (110 aa)) form a coiled coil. Positions 429–700 (FSDELKIGVG…DLGKEILPVL (272 aa)) constitute a Protein kinase domain. Residues 435–443 (IGVGGYGSV) and K456 each bind ATP. D557 (proton acceptor) is an active-site residue. One can recognise a U-box domain in the interval 724 to 796 (NAPTHFYCPI…IKEWRSQLIK (73 aa)).

The protein belongs to the protein kinase superfamily. Ser/Thr protein kinase family.

It carries out the reaction L-seryl-[protein] + ATP = O-phospho-L-seryl-[protein] + ADP + H(+). It catalyses the reaction L-threonyl-[protein] + ATP = O-phospho-L-threonyl-[protein] + ADP + H(+). The enzyme catalyses S-ubiquitinyl-[E2 ubiquitin-conjugating enzyme]-L-cysteine + [acceptor protein]-L-lysine = [E2 ubiquitin-conjugating enzyme]-L-cysteine + N(6)-ubiquitinyl-[acceptor protein]-L-lysine.. The protein operates within protein modification; protein ubiquitination. Its function is as follows. Functions as an E3 ubiquitin ligase. The protein is U-box domain-containing protein 51 (PUB51) of Arabidopsis thaliana (Mouse-ear cress).